Reading from the N-terminus, the 333-residue chain is Ribosomal RNA small subunit methyltransferase H (333 aa).

Residues 36–38 (GGY), D54, F81, D102, and Q109 contribute to the S-adenosyl-L-methionine site.

It belongs to the methyltransferase superfamily. RsmH family.

It is found in the cytoplasm. The enzyme catalyses cytidine(1402) in 16S rRNA + S-adenosyl-L-methionine = N(4)-methylcytidine(1402) in 16S rRNA + S-adenosyl-L-homocysteine + H(+). Specifically methylates the N4 position of cytidine in position 1402 (C1402) of 16S rRNA. This Afipia carboxidovorans (strain ATCC 49405 / DSM 1227 / KCTC 32145 / OM5) (Oligotropha carboxidovorans) protein is Ribosomal RNA small subunit methyltransferase H.